Consider the following 621-residue polypeptide: Glutamine--fructose-6-phosphate aminotransferase [isomerizing] (621 aa).

Cys2 functions as the Nucleophile; for GATase activity in the catalytic mechanism. The Glutamine amidotransferase type-2 domain occupies 2–223 (CGIIGYVGEG…DRELGIISIS (222 aa)). SIS domains lie at 289–436 (LHLE…HKFT) and 470–611 (LSKQ…IDKP). The active-site For Fru-6P isomerization activity is the Lys616.

Homodimer.

Its subcellular location is the plastid. It is found in the chloroplast. It catalyses the reaction D-fructose 6-phosphate + L-glutamine = D-glucosamine 6-phosphate + L-glutamate. Functionally, catalyzes the first step in hexosamine metabolism, converting fructose-6P into glucosamine-6P using glutamine as a nitrogen source. The chain is Glutamine--fructose-6-phosphate aminotransferase [isomerizing] from Cyanidium caldarium (Red alga).